Here is a 171-residue protein sequence, read N- to C-terminus: MVKLNSNPSEKGTKPPSVEDGFQTVPLITPLEVNHLQLPAPEKVIVKTRTEYQPEQKNKGKFRVPKIAEFTVTILVSLALAFLACIVFLVVYKAFTYDHSCPEGFVYKHKRCIPASLDAYYSSQDPNSRSRFYTVISHYSVAKQSTARAIGPWLSAAAVIHEPKPPKTQGH.

Residues 1 to 10 (MVKLNSNPSE) show a composition bias toward polar residues. The segment at 1-21 (MVKLNSNPSEKGTKPPSVEDG) is disordered. Residues 1–71 (MVKLNSNPSE…FRVPKIAEFT (71 aa)) are Cytoplasmic-facing. A helical; Signal-anchor for type II membrane protein transmembrane segment spans residues 72–92 (VTILVSLALAFLACIVFLVVY). Topologically, residues 93–171 (KAFTYDHSCP…EPKPPKTQGH (79 aa)) are lumenal.

It belongs to the NSG family.

It is found in the membrane. The protein resides in the golgi apparatus. It localises to the trans-Golgi network membrane. Its subcellular location is the cell projection. The protein localises to the dendrite. It is found in the endosome membrane. The protein resides in the early endosome membrane. It localises to the late endosome membrane. Its subcellular location is the lysosome lumen. The protein localises to the cytoplasmic vesicle membrane. It is found in the golgi stack membrane. The protein resides in the endosome. It localises to the multivesicular body membrane. This is Neuronal vesicle trafficking-associated protein 2 from Homo sapiens (Human).